The following is a 363-amino-acid chain: Protein-glutamate methylesterase/protein-glutamine glutaminase of group 3 operon (363 aa).

The 118-residue stretch at 7-124 (RVLIVDDSAS…RQALLECSTR (118 aa)) folds into the Response regulatory domain. Position 58 is a 4-aspartylphosphate (aspartate 58). Residues 166-357 (PTTERIVCIG…REIMLWYQAG (192 aa)) enclose the CheB-type methylesterase domain. Residues serine 177, histidine 203, and aspartate 299 contribute to the active site.

Belongs to the CheB family. In terms of processing, phosphorylated by CheA. Phosphorylation of the N-terminal regulatory domain activates the methylesterase activity.

The protein localises to the cytoplasm. It catalyses the reaction [protein]-L-glutamate 5-O-methyl ester + H2O = L-glutamyl-[protein] + methanol + H(+). The enzyme catalyses L-glutaminyl-[protein] + H2O = L-glutamyl-[protein] + NH4(+). Functionally, involved in chemotaxis. Part of a chemotaxis signal transduction system that modulates chemotaxis in response to various stimuli. Catalyzes the demethylation of specific methylglutamate residues introduced into the chemoreceptors (methyl-accepting chemotaxis proteins or MCP) by CheR. Also mediates the irreversible deamidation of specific glutamine residues to glutamic acid. This Bradyrhizobium diazoefficiens (strain JCM 10833 / BCRC 13528 / IAM 13628 / NBRC 14792 / USDA 110) protein is Protein-glutamate methylesterase/protein-glutamine glutaminase of group 3 operon.